A 616-amino-acid polypeptide reads, in one-letter code: Dihydroxy-acid dehydratase (616 aa).

Aspartate 81 is a binding site for Mg(2+). Cysteine 122 lines the [2Fe-2S] cluster pocket. Residues aspartate 123 and lysine 124 each contribute to the Mg(2+) site. Lysine 124 is subject to N6-carboxylysine. A [2Fe-2S] cluster-binding site is contributed by cysteine 195. A Mg(2+)-binding site is contributed by glutamate 491. The active-site Proton acceptor is serine 517.

Belongs to the IlvD/Edd family. As to quaternary structure, homodimer. The cofactor is [2Fe-2S] cluster. Mg(2+) serves as cofactor.

It carries out the reaction (2R)-2,3-dihydroxy-3-methylbutanoate = 3-methyl-2-oxobutanoate + H2O. The catalysed reaction is (2R,3R)-2,3-dihydroxy-3-methylpentanoate = (S)-3-methyl-2-oxopentanoate + H2O. It participates in amino-acid biosynthesis; L-isoleucine biosynthesis; L-isoleucine from 2-oxobutanoate: step 3/4. The protein operates within amino-acid biosynthesis; L-valine biosynthesis; L-valine from pyruvate: step 3/4. In terms of biological role, functions in the biosynthesis of branched-chain amino acids. Catalyzes the dehydration of (2R,3R)-2,3-dihydroxy-3-methylpentanoate (2,3-dihydroxy-3-methylvalerate) into 2-oxo-3-methylpentanoate (2-oxo-3-methylvalerate) and of (2R)-2,3-dihydroxy-3-methylbutanoate (2,3-dihydroxyisovalerate) into 2-oxo-3-methylbutanoate (2-oxoisovalerate), the penultimate precursor to L-isoleucine and L-valine, respectively. In Tolumonas auensis (strain DSM 9187 / NBRC 110442 / TA 4), this protein is Dihydroxy-acid dehydratase.